A 284-amino-acid chain; its full sequence is Para-Rep C3 (284 aa).

Residues 3-98 (TVQSTCWVFT…IEGPWEYGKY (96 aa)) form the CRESS-DNA virus Rep endonuclease domain. The short motif at 10–13 (VFTL) is the RCR-1 element. Glutamate 36 and histidine 42 together coordinate a divalent metal cation. Positions 42-44 (HLQ) match the RCR-2 motif. Positions 51 to 71 (AQQSLGQMKAIIPGAHFEKMR) match the Nuclear localization signal motif. Tyrosine 81 serves as the catalytic For DNA cleavage activity. Positions 81–84 (YAMK) match the RCR-3 motif. A divalent metal cation is bound at residue aspartate 86. Residues 98-104 (YIKKGSH) carry the Nuclear localization signal motif. An ATP-binding site is contributed by 174 to 182 (GPKGGEGKS).

Belongs to the nanoviridea/circoviridae replication-associated protein family. In terms of assembly, homooligomer (Potential). Rep binds to repeated DNA motifs (iterons). Requires Mg(2+) as cofactor. The cofactor is Mn(2+).

The protein resides in the host nucleus. It carries out the reaction ATP + H2O = ADP + phosphate + H(+). Initiates and terminates the replication only of its own subviral DNA molecule. The closed circular ssDNA genome is first converted to a superhelical dsDNA. Rep binds a specific hairpin at the genome origin of replication. Introduces an endonucleolytic nick within the intergenic region of the genome, thereby initiating the rolling circle replication (RCR). Following cleavage, binds covalently to the 5'-phosphate of DNA as a tyrosyl ester. The cleavage gives rise to a free 3'-OH that serves as a primer for the cellular DNA polymerase. The polymerase synthesizes the (+) strand DNA by rolling circle mechanism. After one round of replication, a Rep-catalyzed nucleotidyl transfer reaction releases a circular single-stranded virus genome, thereby terminating the replication. Displays origin-specific DNA cleavage, nucleotidyl transferase, ATPase and helicase activities. The protein is Para-Rep C3 (C3) of Milk vetch dwarf C3 alphasatellite (MVDC3A).